The chain runs to 188 residues: MKAIDNKIEQFALYLQRKNNLDHIQFLKVRLGLQVVVSNLAKTIVTYGVALIFHTFLYTLFTHVSYFLVRRYAHGAHAKSSLLCHVQNLALFVALPWLLVYFQVNLGIMYSVVAIGTVLIIYYAPSATKKQPIPSHLKMKKKLLSIIITMVLLIISFLAPEPFKQLILLGITLESITLLPIFFPREDN.

4 helical membrane-spanning segments follow: residues 49–69 (VALI…YFLV), 100–122 (VYFQ…LIIY), 143–163 (LLSI…PEPF), and 164–184 (KQLI…IFFP).

This sequence belongs to the AgrB family.

Its subcellular location is the cell membrane. Functionally, essential for the production of a quorum sensing system signal molecule, the autoinducing peptide (AIP). This quorum sensing system is responsible for the regulation of the expression of virulence factor genes. Involved in the proteolytic processing of AgrD, the precursor of AIP. This is Accessory gene regulator protein B from Staphylococcus haemolyticus (strain JCSC1435).